The sequence spans 502 residues: Bone morphogenetic protein receptor type-1B (502 aa).

The first 13 residues, 1-13 (MLLRSAGKLNVGT), serve as a signal peptide directing secretion. Positions 1–25 (MLLRSAGKLNVGTKKEDGESTAPTP) are disordered. The Extracellular segment spans residues 14–126 (KKEDGESTAP…DFVDGPIHHR (113 aa)). Disulfide bonds link Cys-32–Cys-53, Cys-34–Cys-38, Cys-47–Cys-71, Cys-81–Cys-95, and Cys-96–Cys-102. Residues 127 to 148 (ALLISVTVCSLLLVLIILFCYF) traverse the membrane as a helical segment. Residues 149 to 502 (RYKRQETRPR…KMSESQDIKL (354 aa)) lie on the Cytoplasmic side of the membrane. One can recognise a GS domain in the interval 174 to 203 (ESLRDLIEQSQSSGSGSGLPLLVQRTIAKQ). A Protein kinase domain is found at 204–494 (IQMVKQIGKG…LRVKKTLAKM (291 aa)). ATP is bound by residues 210 to 218 (IGKGRYGEV) and Lys-231. The active-site Proton acceptor is the Asp-332.

Belongs to the protein kinase superfamily. TKL Ser/Thr protein kinase family. TGFB receptor subfamily. Interacts with high affinity with GDF5; positively regulates chondrocyte differentiation. Interacts with SCUBE3. Interacts with TSC22D1/TSC-22. Interacts with TGFBR3. The cofactor is Mg(2+). Mn(2+) serves as cofactor. Autophosphorylated.

It is found in the cell membrane. The catalysed reaction is L-threonyl-[receptor-protein] + ATP = O-phospho-L-threonyl-[receptor-protein] + ADP + H(+). The enzyme catalyses L-seryl-[receptor-protein] + ATP = O-phospho-L-seryl-[receptor-protein] + ADP + H(+). In terms of biological role, on ligand binding, forms a receptor complex consisting of two type II and two type I transmembrane serine/threonine kinases. Type II receptors phosphorylate and activate type I receptors which autophosphorylate, then bind and activate SMAD transcriptional regulators. Receptor for BMP7/OP-1 and GDF5. Positively regulates chondrocyte differentiation through GDF5 interaction. This is Bone morphogenetic protein receptor type-1B (BMPR1B) from Homo sapiens (Human).